A 214-amino-acid chain; its full sequence is Ependymin (214 aa).

The first 20 residues, 1–20 (MHTVKLLCVVFSCLCAVAWA), serve as a signal peptide directing secretion. Asn-70 and Asn-93 each carry an N-linked (GlcNAc...) asparagine glycan.

This sequence belongs to the ependymin family. Forms disulfide-linked dimers. Binds calcium through the terminal sialic acids.

The protein localises to the secreted. In terms of biological role, may play a role in neural plasticity. May be involved during axon regeneration. This is Ependymin (epd) from Notemigonus crysoleucas (Golden shiner).